A 294-amino-acid chain; its full sequence is N-acetylmuramic acid 6-phosphate etherase (294 aa).

The SIS domain maps to 54-217 (VTKSFEEEGR…STASMIGVGK (164 aa)). Glu-82 acts as the Proton donor in catalysis. The active site involves Glu-113.

It belongs to the GCKR-like family. MurNAc-6-P etherase subfamily. Homodimer.

It catalyses the reaction N-acetyl-D-muramate 6-phosphate + H2O = N-acetyl-D-glucosamine 6-phosphate + (R)-lactate. The protein operates within amino-sugar metabolism; N-acetylmuramate degradation. Its function is as follows. Specifically catalyzes the cleavage of the D-lactyl ether substituent of MurNAc 6-phosphate, producing GlcNAc 6-phosphate and D-lactate. In Bacillus mycoides (strain KBAB4) (Bacillus weihenstephanensis), this protein is N-acetylmuramic acid 6-phosphate etherase.